A 315-amino-acid chain; its full sequence is Ribose-phosphate pyrophosphokinase (315 aa).

ATP contacts are provided by residues Asp37 to Glu39 and Arg96 to Gln97. Positions 131 and 170 each coordinate Mg(2+). Residue Lys194 is part of the active site. D-ribose 5-phosphate is bound by residues Arg196, Asp220, and Asp224–Thr228.

Belongs to the ribose-phosphate pyrophosphokinase family. Class I subfamily. In terms of assembly, homohexamer. Mg(2+) serves as cofactor.

The protein resides in the cytoplasm. It catalyses the reaction D-ribose 5-phosphate + ATP = 5-phospho-alpha-D-ribose 1-diphosphate + AMP + H(+). Its pathway is metabolic intermediate biosynthesis; 5-phospho-alpha-D-ribose 1-diphosphate biosynthesis; 5-phospho-alpha-D-ribose 1-diphosphate from D-ribose 5-phosphate (route I): step 1/1. Involved in the biosynthesis of the central metabolite phospho-alpha-D-ribosyl-1-pyrophosphate (PRPP) via the transfer of pyrophosphoryl group from ATP to 1-hydroxyl of ribose-5-phosphate (Rib-5-P). The chain is Ribose-phosphate pyrophosphokinase from Escherichia coli O6:H1 (strain CFT073 / ATCC 700928 / UPEC).